Here is a 195-residue protein sequence, read N- to C-terminus: MELSESVQKGFQMLADPRSFDSNAFTLLLRAAFQSLLDAQADEAVLDHPDLKHIDPVVLKHCHAAAATYILEAGKHRADKSTLSTYLEDCKFDRERIELFCTEYQNNKNSLEILLGSIGRSLPHITDVSWRLEYQIKTNQLHRMYRPAYLVTLSVQNTDSPSYPEISFSCSMEQLQDLVGKLKDASKSLERATQL.

Positions 124–193 constitute a COMM domain; that stretch reads HITDVSWRLE…DASKSLERAT (70 aa).

The protein belongs to the COMM domain-containing protein 3 family. As to quaternary structure, component of the commander complex consisting of the CCC subcomplex and the retriever subcomplex. Component of the CCC (COMMD/CCDC22/CCDC93) subcomplex consisting of COMMD1, COMMD2, COMMD3, COMMD4, COMMD5, COMMD6, COMMD7, COMMD8, COMMD9, COMMD10, CCDC22 and CCDC93; within the complex forms a heterodimer with COMMD2. Interacts with NFKB1/p105. Interacts with CCDC22, CCDC93, SCNN1B, CUL3, CUL4A, CUL4B, CUL5. As to expression, widely expressed with highest expression in thymus.

It localises to the cytoplasm. Its subcellular location is the nucleus. Functionally, scaffold protein in the commander complex that is essential for endosomal recycling of transmembrane cargos; the commander complex is composed of the CCC subcomplex and the retriever subcomplex. May modulate activity of cullin-RING E3 ubiquitin ligase (CRL) complexes. May down-regulate activation of NF-kappa-B. Modulates Na(+) transport in epithelial cells by regulation of apical cell surface expression of amiloride-sensitive sodium channel (ENaC) subunits. The sequence is that of COMM domain-containing protein 3 (COMMD3) from Homo sapiens (Human).